The following is a 137-amino-acid chain: Putative pre-16S rRNA nuclease (137 aa).

The protein belongs to the YqgF nuclease family.

It localises to the cytoplasm. In terms of biological role, could be a nuclease involved in processing of the 5'-end of pre-16S rRNA. The protein is Putative pre-16S rRNA nuclease of Anaeromyxobacter sp. (strain K).